The primary structure comprises 226 residues: Octanoyltransferase (226 aa).

A BPL/LPL catalytic domain is found at 37–220 (GTAGELIWLL…SFSKVFGPVE (184 aa)). Residues 76–83 (RGGQFTYH), 151–153 (AIG), and 164–166 (GIS) each bind substrate. Cys182 (acyl-thioester intermediate) is an active-site residue.

This sequence belongs to the LipB family.

The protein localises to the cytoplasm. The catalysed reaction is octanoyl-[ACP] + L-lysyl-[protein] = N(6)-octanoyl-L-lysyl-[protein] + holo-[ACP] + H(+). Its pathway is protein modification; protein lipoylation via endogenous pathway; protein N(6)-(lipoyl)lysine from octanoyl-[acyl-carrier-protein]: step 1/2. Catalyzes the transfer of endogenously produced octanoic acid from octanoyl-acyl-carrier-protein onto the lipoyl domains of lipoate-dependent enzymes. Lipoyl-ACP can also act as a substrate although octanoyl-ACP is likely to be the physiological substrate. The sequence is that of Octanoyltransferase from Caulobacter vibrioides (strain ATCC 19089 / CIP 103742 / CB 15) (Caulobacter crescentus).